Here is a 246-residue protein sequence, read N- to C-terminus: 1-(5-phosphoribosyl)-5-[(5-phosphoribosylamino)methylideneamino] imidazole-4-carboxamide isomerase (246 aa).

Asp8 (proton acceptor) is an active-site residue. Asp129 acts as the Proton donor in catalysis.

It belongs to the HisA/HisF family.

It localises to the cytoplasm. The catalysed reaction is 1-(5-phospho-beta-D-ribosyl)-5-[(5-phospho-beta-D-ribosylamino)methylideneamino]imidazole-4-carboxamide = 5-[(5-phospho-1-deoxy-D-ribulos-1-ylimino)methylamino]-1-(5-phospho-beta-D-ribosyl)imidazole-4-carboxamide. It participates in amino-acid biosynthesis; L-histidine biosynthesis; L-histidine from 5-phospho-alpha-D-ribose 1-diphosphate: step 4/9. The polypeptide is 1-(5-phosphoribosyl)-5-[(5-phosphoribosylamino)methylideneamino] imidazole-4-carboxamide isomerase (Desulforamulus reducens (strain ATCC BAA-1160 / DSM 100696 / MI-1) (Desulfotomaculum reducens)).